The primary structure comprises 282 residues: Biotin synthase (282 aa).

One can recognise a Radical SAM core domain in the interval 1–228 (MQEIFLCSIS…NARLMAAGGR (228 aa)). [4Fe-4S] cluster contacts are provided by Cys-17, Cys-21, and Cys-24. 4 residues coordinate [2Fe-2S] cluster: Cys-61, Cys-96, Cys-154, and Arg-221.

The protein belongs to the radical SAM superfamily. Biotin synthase family. As to quaternary structure, homodimer. The cofactor is [4Fe-4S] cluster. [2Fe-2S] cluster serves as cofactor.

The enzyme catalyses (4R,5S)-dethiobiotin + (sulfur carrier)-SH + 2 reduced [2Fe-2S]-[ferredoxin] + 2 S-adenosyl-L-methionine = (sulfur carrier)-H + biotin + 2 5'-deoxyadenosine + 2 L-methionine + 2 oxidized [2Fe-2S]-[ferredoxin]. The protein operates within cofactor biosynthesis; biotin biosynthesis; biotin from 7,8-diaminononanoate: step 2/2. Functionally, catalyzes the conversion of dethiobiotin (DTB) to biotin by the insertion of a sulfur atom into dethiobiotin via a radical-based mechanism. This Helicobacter acinonychis (strain Sheeba) protein is Biotin synthase.